Reading from the N-terminus, the 790-residue chain is Lon protease 2 (790 aa).

Positions L18–L210 constitute a Lon N-terminal domain. Position 362–369 (G362–T369) interacts with ATP. Positions S598–P779 constitute a Lon proteolytic domain. Active-site residues include S685 and K728.

This sequence belongs to the peptidase S16 family. As to quaternary structure, homohexamer. Organized in a ring with a central cavity.

The protein resides in the cytoplasm. It carries out the reaction Hydrolysis of proteins in presence of ATP.. Its function is as follows. ATP-dependent serine protease that mediates the selective degradation of mutant and abnormal proteins as well as certain short-lived regulatory proteins. Required for cellular homeostasis and for survival from DNA damage and developmental changes induced by stress. Degrades polypeptides processively to yield small peptide fragments that are 5 to 10 amino acids long. Binds to DNA in a double-stranded, site-specific manner. The chain is Lon protease 2 from Syntrophobacter fumaroxidans (strain DSM 10017 / MPOB).